The primary structure comprises 403 residues: Poly(rC)-binding protein 4 (403 aa).

3 consecutive KH domains span residues 17–67, 101–154, and 241–293; these read TLTL…TITG, PVTL…TVSG, and TSSQ…TITG.

As to expression, widely expressed, with highest levels in testis and lowest in heart.

The protein localises to the cytoplasm. In terms of biological role, single-stranded nucleic acid binding protein that binds preferentially to oligo dC. The sequence is that of Poly(rC)-binding protein 4 (Pcbp4) from Mus musculus (Mouse).